The chain runs to 206 residues: Pyrrolidone-carboxylate peptidase (206 aa).

Residues glutamate 78, cysteine 141, and histidine 165 contribute to the active site.

The protein belongs to the peptidase C15 family. In terms of assembly, homotetramer.

The protein resides in the cytoplasm. The catalysed reaction is Release of an N-terminal pyroglutamyl group from a polypeptide, the second amino acid generally not being Pro.. Its function is as follows. Removes 5-oxoproline from various penultimate amino acid residues except L-proline. The polypeptide is Pyrrolidone-carboxylate peptidase (Thermococcus kodakarensis (strain ATCC BAA-918 / JCM 12380 / KOD1) (Pyrococcus kodakaraensis (strain KOD1))).